The sequence spans 147 residues: MVHFTAEEKAAITSTWKLVDVEDAGAEALGRLLVVYPWTQRFFDSFGNLSSSSAIMGNPKVKAHGKKVLTAFGDAVKNVDDLKNTFAHLSELHCDRLHVDPENFKLLGNVLVIVLAKYFGKEFTPQVQSAWQKLVAGVATALAHKYH.

One can recognise a Globin domain in the interval 3–147; sequence HFTAEEKAAI…VATALAHKYH (145 aa). 2 residues coordinate heme b: His-64 and His-93.

Belongs to the globin family. As to quaternary structure, heterotetramer of two alpha chains and two gamma chains. In terms of tissue distribution, red blood cells.

In terms of biological role, this protein functions as an embryonic globin, but the gene structure and chromosomal location resemble more closely the human gamma chain gene, which codes for a fetal globin. The chain is Hemoglobin subunit gamma (HBG) from Oryctolagus cuniculus (Rabbit).